Here is a 638-residue protein sequence, read N- to C-terminus: Plasma kallikrein (638 aa).

An N-terminal signal peptide occupies residues M1–C19. Apple domains are found at residues C21–C104, C111–C194, C201–C284, and C292–C375. 18 disulfides stabilise this stretch: C21-C104, C47-C77, C51-C57, C111-C194, C137-C166, C141-C147, C201-C284, C227-C256, C231-C237, C292-C375, C318-C347, C322-C328, C340-C345, C383-C503, C419-C435, C517-C584, C548-C563, and C574-C602. N127 carries an N-linked (GlcNAc...) asparagine glycan. N308 carries N-linked (GlcNAc...) asparagine glycosylation. The region spanning I391–Q626 is the Peptidase S1 domain. N396 is a glycosylation site (N-linked (GlcNAc...) asparagine). H434 serves as the catalytic Charge relay system. N-linked (GlcNAc...) asparagine glycosylation is present at N453. Catalysis depends on D483, which acts as the Charge relay system. A glycan (N-linked (GlcNAc...) asparagine) is linked at N494. Catalysis depends on S578, which acts as the Charge relay system.

This sequence belongs to the peptidase S1 family. Plasma kallikrein subfamily. Forms a heterodimer with SERPINA5. The zymogen is activated by factor XIIa, which cleaves the molecule into a light chain, which contains the active site, and a heavy chain, which associates with HMW kininogen. These chains are linked by one or more disulfide bonds. Interacts with iripin-3, a serine protease inhibitor from Ixodes ricinus saliva. Interacts with iripin-1, a serine protease inhibitor from Ixodes ricinus saliva. As to expression, found in plasma (at protein level).

Its subcellular location is the secreted. It catalyses the reaction Cleaves selectively Arg-|-Xaa and Lys-|-Xaa bonds, including Lys-|-Arg and Arg-|-Ser bonds in (human) kininogen to release bradykinin.. With respect to regulation, inhibited by SERPINA5. Participates in the surface-dependent activation of blood coagulation. Activates, in a reciprocal reaction, coagulation factor XII/F12 after binding to negatively charged surfaces. Releases bradykinin from HMW kininogen and may also play a role in the renin-angiotensin system by converting prorenin into renin. This is Plasma kallikrein (KLKB1) from Homo sapiens (Human).